A 189-amino-acid chain; its full sequence is Ras-like protein 1 (189 aa).

10 to 17 (GAGGVGKS) is a GTP binding site. Positions 32 to 40 (YDPTIEDSY) match the Effector region motif. Residues 57–61 (DTAGQ) and 116–119 (NKCD) each bind GTP. The residue at position 186 (Cys186) is a Cysteine methyl ester. Residue Cys186 is the site of S-geranylgeranyl cysteine attachment. Positions 187–189 (KML) are cleaved as a propeptide — removed in mature form.

Belongs to the small GTPase superfamily. Ras family.

It is found in the cell membrane. It carries out the reaction GTP + H2O = GDP + phosphate + H(+). Its activity is regulated as follows. Alternates between an inactive form bound to GDP and an active form bound to GTP. Activated by a guanine nucleotide-exchange factor (GEF) and inactivated by a GTPase-activating protein (GAP). Ras proteins bind GDP/GTP and possess intrinsic GTPase activity. Plays a role in eye development by regulating cell growth, survival of postmitotic ommatidial cells and differentiation of photoreceptor cells. During larval development, mediates Ptth/tor signaling leading to the production of ecdysone, a hormone required for the initiation of metamorphosis. The protein is Ras-like protein 1 of Drosophila willistoni (Fruit fly).